We begin with the raw amino-acid sequence, 420 residues long: MDEDAESRVSSTRSYDRRGHLDWLRKLPDSLLCQVFLNLPTKDVVKTSVLSSTWGNIWRSVPGLDLGYGDFPEYNAFVSFVDSFLGFNSESRLQNFKLNYQYLRLKYEWKWTELDNANVTRWINTVIKRKVEHLHLSDVTFSNPESVSLPCVKVMYLDMVKFANDLAFEMLISGCPVLESLTIKRSACDNVDYLRVCSQSLLSFTLVGHCNEDMVKEQVVAIDAPRLEDLKLYCHETASFIIKNPASLVKMDIDIMFNLSSEQKFDPNDLPKRNMIRNFLLGISGVKEMEISSHTLEVIYNYSRCERLPVFRNLSSLHADFDDYRWEMLPGFSKTPGEEPISILPGPQCNLPALEFVDILKPMVEKETELKLMSYFLEKSTILKKLTLRLGDFRGNEESALLKKLLTIPRLSSSCQVVVL.

The region spanning 21–71 is the F-box domain; it reads LDWLRKLPDSLLCQVFLNLPTKDVVKTSVLSSTWGNIWRSVPGLDLGYGDF. Residues 341–390 form the FBD domain; it reads ISILPGPQCNLPALEFVDILKPMVEKETELKLMSYFLEKSTILKKLTLRL.

This is Putative FBD-associated F-box protein At1g78730 from Arabidopsis thaliana (Mouse-ear cress).